Here is a 433-residue protein sequence, read N- to C-terminus: KH domain-containing, RNA-binding, signal transduction-associated protein 1 (433 aa).

Residues 1 to 79 (MQRRDDSSAR…PLLPGGAVKM (79 aa)) form a disordered region. Positions 41–76 (GAQHPQPLLTGGAAAGSSGAQGPAAANPAPLLPGGA) are enriched in low complexity. The tract at residues 82 to 243 (ENKYLPELMA…VKKFLVPDMM (162 aa)) is involved in homodimerization. Residues 171–197 (QEETGAKISVLGKGSMRDKAKEEELRK) enclose the KH domain. Disordered regions lie at residues 259–305 (GVPE…ALVR), 317–351 (AAVA…PPPP), and 403–433 (QDDW…YGRY). The segment covering 277–300 (APPPPPPVPRGRGVGPPPPPPPPR) has biased composition (pro residues). The span at 329–342 (VRGAPAPRARAAGI) shows a compositional bias: low complexity. The segment covering 424–433 (AYREHPYGRY) has biased composition (basic and acidic residues).

Belongs to the KHDRBS family. In terms of assembly, self-associates to form homooligomers when bound to RNA, oligomerization appears to be limited when binding to proteins. Tyrosine phosphorylated by several non-receptor tyrosine kinases including LCK, FYN and JAK3. Post-translationally, acetylated. Positively correlates with ability to bind RNA. In terms of processing, methylated by HRMT1L2. Required for nuclear localization.

It is found in the nucleus. It localises to the cytoplasm. Its subcellular location is the membrane. Recruited and tyrosine phosphorylated by several receptor systems, for example the T-cell, leptin and insulin receptors. Once phosphorylated, functions as an adapter protein in signal transduction cascades by binding to SH2 and SH3 domain-containing proteins. Role in G2-M progression in the cell cycle. Represses CBP-dependent transcriptional activation apparently by competing with other nuclear factors for binding to CBP. Also acts as a putative regulator of mRNA stability and/or translation rates and mediates mRNA nuclear export. Plays a role in the regulation of alternative splicing and influences mRNA splice site selection and exon inclusion. The sequence is that of KH domain-containing, RNA-binding, signal transduction-associated protein 1 from Gallus gallus (Chicken).